Here is a 394-residue protein sequence, read N- to C-terminus: N-acetylgalactosamine-6-phosphate deacetylase (394 aa).

Zn(2+) is bound at residue Glu137. Position 148 to 149 (148 to 149 (CH)) interacts with substrate. The Zn(2+) site is built by His201 and His222. Residues 225–226 (NG), Arg233, and 254–257 (DGQH) contribute to the substrate site. The active-site Proton donor/acceptor is the Asp280. 313-315 (LAG) is a substrate binding site.

It belongs to the metallo-dependent hydrolases superfamily. NagA family.

Its subcellular location is the cytoplasm. The catalysed reaction is N-acetyl-D-galactosamine 6-phosphate + H2O = D-galactosamine 6-phosphate + acetate. It carries out the reaction N-acetyl-D-glucosamine 6-phosphate + H2O = D-glucosamine 6-phosphate + acetate. Involved in the pathway of N-acetyl-D-galactosamine degradation. Catalyzes the conversion of N-acetyl-D-galactosamine 6-phosphate to D-galactosamine 6-phosphate and acetate. It can also catalyze the conversion of N-acetyl-D-glucosamine 6-phosphate. This is N-acetylgalactosamine-6-phosphate deacetylase from Shewanella sp. (strain ANA-3).